The following is a 406-amino-acid chain: Serine/threonine transporter SstT (406 aa).

A run of 9 helical transmembrane segments spans residues 11–31, 45–65, 79–99, 141–161, 185–205, 216–236, 298–318, 330–350, and 357–377; these read IGLV…GWLM, FVGA…MAAI, VLIM…VASF, AIAN…GLAL, FVIA…IAET, LLTI…PIIV, MAGA…TLGV, VVAT…LLLI, and FNIP…IGVV.

Belongs to the dicarboxylate/amino acid:cation symporter (DAACS) (TC 2.A.23) family.

The protein resides in the cell inner membrane. The enzyme catalyses L-serine(in) + Na(+)(in) = L-serine(out) + Na(+)(out). It carries out the reaction L-threonine(in) + Na(+)(in) = L-threonine(out) + Na(+)(out). Functionally, involved in the import of serine and threonine into the cell, with the concomitant import of sodium (symport system). The sequence is that of Serine/threonine transporter SstT from Psychrobacter sp. (strain PRwf-1).